Consider the following 268-residue polypeptide: Small ribosomal subunit protein uS2 (268 aa).

Residues 161 to 179 (IPCNNDKYSIALMLWMLAR) are laminin-binding.

Belongs to the universal ribosomal protein uS2 family. In terms of assembly, component of the small ribosomal subunit. Mature ribosomes consist of a small (40S) and a large (60S) subunit. The 40S subunit contains about 33 different proteins and 1 molecule of RNA (18S). The 60S subunit contains about 49 different proteins and 3 molecules of RNA (28S, 5.8S and 5S). Interacts with ribosomal protein S21.

The protein localises to the cytoplasm. Required for the assembly and/or stability of the 40S ribosomal subunit. Required for the processing of the 20S rRNA-precursor to mature 18S rRNA in a late step of the maturation of 40S ribosomal subunits. Binds laminin. This is Small ribosomal subunit protein uS2 (egmo3) from Echinococcus granulosus (Hydatid tapeworm).